A 449-amino-acid polypeptide reads, in one-letter code: Hyaluronidase (449 aa).

Positions 1 to 23 are cleaved as a signal peptide; it reads MYHIWIKFLAAWIFLKRFNGVHV. Cystine bridges form between C47–C340 and C211–C227. N-linked (GlcNAc...) asparagine glycosylation is found at N67, N103, and N111. The active-site Proton donor is the E135. N-linked (GlcNAc...) asparagine glycosylation is present at N153. N357 is a glycosylation site (N-linked (GlcNAc...) asparagine). 3 disulfide bridges follow: C365-C376, C370-C427, and C429-C438. N401 carries N-linked (GlcNAc...) asparagine glycosylation. An EGF-like domain is found at 427–438; that stretch reads CQCYQGWKGLYC.

This sequence belongs to the glycosyl hydrolase 56 family. In terms of assembly, monomer. In terms of tissue distribution, expressed by the venom gland.

The protein localises to the secreted. It catalyses the reaction Random hydrolysis of (1-&gt;4)-linkages between N-acetyl-beta-D-glucosamine and D-glucuronate residues in hyaluronate.. Functionally, snake venom endo-hyaluronidase that degrades hyaluronan to smaller oligosaccharide fragments. In venom, it is not toxic by itself, but increases the diffusion of other venom proteins by degrading the extracellular matrix. In addition, it displays antiedematogenic activity. This Echis pyramidum leakeyi (Leakey's carpet viper) protein is Hyaluronidase.